We begin with the raw amino-acid sequence, 75 residues long: CDC42 small effector protein 2-B (75 aa).

S-palmitoyl cysteine attachment occurs at residues C10 and C11. The CRIB domain maps to 29–42; it reads IGEPMNFVHTAHVG.

This sequence belongs to the CDC42SE/SPEC family.

The protein localises to the cytoplasm. It is found in the cytoskeleton. It localises to the cell membrane. Probably involved in the organization of the actin cytoskeleton by acting downstream of CDC42, inducing actin filament assembly. The protein is CDC42 small effector protein 2-B (cdc42se2-b) of Xenopus laevis (African clawed frog).